The sequence spans 180 residues: Large ribosomal subunit protein uL6 (180 aa).

This sequence belongs to the universal ribosomal protein uL6 family. In terms of assembly, part of the 50S ribosomal subunit.

Its function is as follows. This protein binds to the 23S rRNA, and is important in its secondary structure. It is located near the subunit interface in the base of the L7/L12 stalk, and near the tRNA binding site of the peptidyltransferase center. The sequence is that of Large ribosomal subunit protein uL6 from Anaeromyxobacter dehalogenans (strain 2CP-1 / ATCC BAA-258).